The chain runs to 245 residues: NAD(P)H-quinone oxidoreductase subunit K (245 aa).

Positions 58, 59, 123, and 154 each coordinate [4Fe-4S] cluster. The interval 210–245 is disordered; that stretch reads SDTRSAPPKELAEAIGMPIPPALLTEKAQKEEQTRG. Residues 236–245 are compositionally biased toward basic and acidic residues; that stretch reads KAQKEEQTRG.

Belongs to the complex I 20 kDa subunit family. As to quaternary structure, NDH-1 can be composed of about 15 different subunits; different subcomplexes with different compositions have been identified which probably have different functions. Requires [4Fe-4S] cluster as cofactor.

The protein localises to the cellular thylakoid membrane. It carries out the reaction a plastoquinone + NADH + (n+1) H(+)(in) = a plastoquinol + NAD(+) + n H(+)(out). The catalysed reaction is a plastoquinone + NADPH + (n+1) H(+)(in) = a plastoquinol + NADP(+) + n H(+)(out). Its function is as follows. NDH-1 shuttles electrons from an unknown electron donor, via FMN and iron-sulfur (Fe-S) centers, to quinones in the respiratory and/or the photosynthetic chain. The immediate electron acceptor for the enzyme in this species is believed to be plastoquinone. Couples the redox reaction to proton translocation, and thus conserves the redox energy in a proton gradient. Cyanobacterial NDH-1 also plays a role in inorganic carbon-concentration. The chain is NAD(P)H-quinone oxidoreductase subunit K from Nostoc punctiforme (strain ATCC 29133 / PCC 73102).